A 118-amino-acid chain; its full sequence is Holo-[acyl-carrier-protein] synthase (118 aa).

Residues aspartate 8 and glutamate 58 each contribute to the Mg(2+) site.

The protein belongs to the P-Pant transferase superfamily. AcpS family. It depends on Mg(2+) as a cofactor.

It is found in the cytoplasm. It catalyses the reaction apo-[ACP] + CoA = holo-[ACP] + adenosine 3',5'-bisphosphate + H(+). In terms of biological role, transfers the 4'-phosphopantetheine moiety from coenzyme A to a Ser of acyl-carrier-protein. The chain is Holo-[acyl-carrier-protein] synthase from Streptococcus uberis (strain ATCC BAA-854 / 0140J).